Reading from the N-terminus, the 226-residue chain is uncharacterized protein (226 aa).

Residues threonine 121–isoleucine 163 adopt a coiled-coil conformation.

This is an uncharacterized protein from Methanocaldococcus jannaschii (strain ATCC 43067 / DSM 2661 / JAL-1 / JCM 10045 / NBRC 100440) (Methanococcus jannaschii).